The primary structure comprises 144 residues: Large ribosomal subunit protein uL15 (144 aa).

Over residues 1–13 the composition is skewed to basic residues; it reads MVRERTKKLRGGH. A disordered region spans residues 1-32; the sequence is MVRERTKKLRGGHYGRGFKAGRGKGKKGGSGN.

The protein belongs to the universal ribosomal protein uL15 family. In terms of assembly, part of the 50S ribosomal subunit.

Binds to the 23S rRNA. The polypeptide is Large ribosomal subunit protein uL15 (Thermoplasma acidophilum (strain ATCC 25905 / DSM 1728 / JCM 9062 / NBRC 15155 / AMRC-C165)).